A 266-amino-acid chain; its full sequence is Expansin-A13 (266 aa).

The signal sequence occupies residues 1 to 19 (MQRFLLPLLFLALSPPAIC). The region spanning 58–171 (GGACGYGDLV…RRINCRKEGS (114 aa)) is the Expansin-like EG45 domain. In terms of domain architecture, Expansin-like CBD spans 181–260 (IFISVLITNV…NWNYGQTFEG (80 aa)).

The protein belongs to the expansin family. Expansin A subfamily.

The protein resides in the secreted. Its subcellular location is the cell wall. It is found in the membrane. Its function is as follows. Causes loosening and extension of plant cell walls by disrupting non-covalent bonding between cellulose microfibrils and matrix glucans. No enzymatic activity has been found. This chain is Expansin-A13 (EXPA13), found in Arabidopsis thaliana (Mouse-ear cress).